Reading from the N-terminus, the 34-residue chain is Photosystem I reaction center subunit XII (34 aa).

Residues 10-32 (IFIALVVAAHAGVLAVRLCVSLY) form a helical membrane-spanning segment.

The protein belongs to the PsaM family.

Its subcellular location is the cellular thylakoid membrane. The sequence is that of Photosystem I reaction center subunit XII from Synechococcus sp. (strain WH7803).